Consider the following 437-residue polypeptide: GTPase Der (437 aa).

2 EngA-type G domains span residues proline 4–alanine 167 and isoleucine 176–arginine 352. GTP-binding positions include glycine 10–serine 17, aspartate 57–isoleucine 61, asparagine 119–aspartate 122, glycine 182–serine 189, aspartate 230–methionine 234, and asparagine 295–aspartate 298. The region spanning lysine 353–lysine 437 is the KH-like domain.

It belongs to the TRAFAC class TrmE-Era-EngA-EngB-Septin-like GTPase superfamily. EngA (Der) GTPase family. In terms of assembly, associates with the 50S ribosomal subunit.

GTPase that plays an essential role in the late steps of ribosome biogenesis. In Leuconostoc citreum (strain KM20), this protein is GTPase Der.